The following is a 520-amino-acid chain: MSTTAYPDTILIIDFGSQVTQLIARRVREANVYCEIVPFQSADEAFKRLQPKGVILSGSPHSTTDIGSPRAPQAIFDAGIPVLGICYGEQTMCAQLGGNVESGHDREFGRAFLDVQEDSPLFAGIWAKGTRHQVWMSHGDRVTSLPDGFTIIGTSPNAPYAVIADEKRKYYGVQFHPEVVHTPDGAKLLQNFVHRIVGVKPGWTMGAYREQAVEAIRKQVGSGKVICALSGGVDSSVAALLAHEAVGDQLTCILVDHGLMRKDEAQQVVEMFREHYNLPLILVDASDRFIGALEGESDPEKKRKTIGRLFIEVFEEEARKLGGADFLVQGTLYPDVIESVSFTGGPSVTIKSHHNVGGLPERMKMQLVEPLRELFKDEVRLLGKELGLPDSFIGRHPFPGPGLAIRCPGGVTREKLEILREADAIYLDEIRKAGLYDAIWQAFAVLLPVQTVGVMGDGRTYEFVCALRAVTSVDGMTADFYHYDMNFLGNAATRIINEVRGINRVVYDVTSKPPGTIEWE.

The Glutamine amidotransferase type-1 domain occupies 9–202 (TILIIDFGSQ…VHRIVGVKPG (194 aa)). The active-site Nucleophile is the Cys-86. Active-site residues include His-176 and Glu-178. The GMPS ATP-PPase domain occupies 203 to 395 (WTMGAYREQA…LGLPDSFIGR (193 aa)). Residue 230 to 236 (SGGVDSS) participates in ATP binding.

In terms of assembly, homodimer.

It carries out the reaction XMP + L-glutamine + ATP + H2O = GMP + L-glutamate + AMP + diphosphate + 2 H(+). The protein operates within purine metabolism; GMP biosynthesis; GMP from XMP (L-Gln route): step 1/1. In terms of biological role, catalyzes the synthesis of GMP from XMP. In Brucella abortus (strain S19), this protein is GMP synthase [glutamine-hydrolyzing].